The chain runs to 521 residues: (+)-kolavenyl diphosphate synthase (521 aa).

Positions 311 and 313 each coordinate Mg(2+). Residues 311-314 (DGDD) carry the DXDD motif motif.

It belongs to the terpene synthase family. Mg(2+) is required as a cofactor.

It catalyses the reaction (2E,6E,10E)-geranylgeranyl diphosphate = (+)-kolavenyl diphosphate. Involved in the biosynthesis of (+)-O-methylkolavelool. Catalyzes the conversion of geranylgeranyl diphosphate into (+)-kolavenyl diphosphate. This chain is (+)-kolavenyl diphosphate synthase, found in Herpetosiphon aurantiacus (strain ATCC 23779 / DSM 785 / 114-95).